We begin with the raw amino-acid sequence, 205 residues long: Ribosomal RNA small subunit methyltransferase J (205 aa).

S-adenosyl-L-methionine-binding positions include 56-57, 72-73, and Asp-124; these read RD and ER.

It belongs to the methyltransferase superfamily. RsmJ family.

The protein resides in the cytoplasm. The catalysed reaction is guanosine(1516) in 16S rRNA + S-adenosyl-L-methionine = N(2)-methylguanosine(1516) in 16S rRNA + S-adenosyl-L-homocysteine + H(+). In terms of biological role, specifically methylates the guanosine in position 1516 of 16S rRNA. This Brucella anthropi (strain ATCC 49188 / DSM 6882 / CCUG 24695 / JCM 21032 / LMG 3331 / NBRC 15819 / NCTC 12168 / Alc 37) (Ochrobactrum anthropi) protein is Ribosomal RNA small subunit methyltransferase J.